Reading from the N-terminus, the 122-residue chain is Large ribosomal subunit protein bL12 (122 aa).

This sequence belongs to the bacterial ribosomal protein bL12 family. In terms of assembly, homodimer. Part of the ribosomal stalk of the 50S ribosomal subunit. Forms a multimeric L10(L12)X complex, where L10 forms an elongated spine to which 2 to 4 L12 dimers bind in a sequential fashion. Binds GTP-bound translation factors.

Forms part of the ribosomal stalk which helps the ribosome interact with GTP-bound translation factors. Is thus essential for accurate translation. In Myxococcus xanthus (strain DK1622), this protein is Large ribosomal subunit protein bL12.